The chain runs to 302 residues: tRNA dimethylallyltransferase (302 aa).

Residue 9-16 coordinates ATP; that stretch reads GPTGTGKS. 11 to 16 contributes to the substrate binding site; it reads TGTGKS.

This sequence belongs to the IPP transferase family. As to quaternary structure, monomer. Mg(2+) is required as a cofactor.

The enzyme catalyses adenosine(37) in tRNA + dimethylallyl diphosphate = N(6)-dimethylallyladenosine(37) in tRNA + diphosphate. Its function is as follows. Catalyzes the transfer of a dimethylallyl group onto the adenine at position 37 in tRNAs that read codons beginning with uridine, leading to the formation of N6-(dimethylallyl)adenosine (i(6)A). The polypeptide is tRNA dimethylallyltransferase (Mycolicibacterium smegmatis (strain ATCC 700084 / mc(2)155) (Mycobacterium smegmatis)).